The primary structure comprises 620 residues: Chaperone protein HscA homolog (620 aa).

This sequence belongs to the heat shock protein 70 family.

In terms of biological role, chaperone involved in the maturation of iron-sulfur cluster-containing proteins. Has a low intrinsic ATPase activity which is markedly stimulated by HscB. This is Chaperone protein HscA homolog from Pseudomonas savastanoi pv. phaseolicola (strain 1448A / Race 6) (Pseudomonas syringae pv. phaseolicola (strain 1448A / Race 6)).